A 24-amino-acid polypeptide reads, in one-letter code: Prokineticin 1-like protein (24 aa).

An intrachain disulfide couples Cys7 to Cys19.

Expressed by the skin glands.

The protein resides in the secreted. Functionally, stimulates insulin secretion by BRIN-BD11 cells in vitro. This Pelophylax saharicus (Sahara frog) protein is Prokineticin 1-like protein.